The chain runs to 380 residues: MHICNIIEKIKKIDLFHPVSIVIIGHLMIFILAFPYLDDIGLYSLFKILGVLSIFIVGFFLPFIFPMQIKFNRHILYLSFLLLSFLSIFGAFKITHSLFLSIAYLLFILIIAELFVKFYKKKIFVDILFSIGIIAFLLIVLIYGAIPLFNYEVRMTINSEPLRLISMGALIYAGIENKVYFIIAFMILVLLGYKAGVLMLFIAYIIYRYRNILFKYMVLLAFALLIFLGIMGKIILLSSNQNWDLNPIELLCYRAYFDLYVLSKIVESNILTLGKITLTPNGEHFIGELLFKYPHNITTTLFGTIYLDFGIFGGLFAMLLGVISKYIYEGDKKLYAIYASLLLAYCEIGINYGFLVVLSLLLYINAKLVFAKLLKLINEL.

Transmembrane regions (helical) follow at residues 15–35, 45–65, 75–95, 98–118, 123–143, 182–202, 217–237, 303–323, and 341–361; these read LFHP…LAFP, LFKI…PFIF, ILYL…FKIT, LFLS…FVKF, IFVD…VLIY, IIAF…MLFI, MVLL…IILL, GTIY…LGVI, and LLLA…LSLL.

The protein resides in the cell membrane. This is an uncharacterized protein from Methanocaldococcus jannaschii (strain ATCC 43067 / DSM 2661 / JAL-1 / JCM 10045 / NBRC 100440) (Methanococcus jannaschii).